Consider the following 483-residue polypeptide: Altronate oxidoreductase (483 aa).

NAD(+) is bound at residue 18–29 (IIQFGEGNFLRA).

It belongs to the mannitol dehydrogenase family. UxaB subfamily.

It catalyses the reaction D-altronate + NAD(+) = keto-D-tagaturonate + NADH + H(+). Its pathway is carbohydrate metabolism; pentose and glucuronate interconversion. This is Altronate oxidoreductase from Escherichia coli O7:K1 (strain IAI39 / ExPEC).